Consider the following 283-residue polypeptide: uncharacterized protein (283 aa).

In terms of domain architecture, FAD-binding FR-type spans 4 to 131 (RPLHAFEVVA…MGPGGAYAPD (128 aa)).

This is an uncharacterized protein from Mycobacterium bovis (strain ATCC BAA-935 / AF2122/97).